The chain runs to 126 residues: Fluoride-specific ion channel FluC (126 aa).

The next 4 membrane-spanning stretches (helical) occupy residues 5–25, 34–54, 71–91, and 100–120; these read ILCVGTGGFVGAILRFLFYFG, YIFIATICVNIIGSFIIGFVL, VTGLLGALTTFSTFTYENAVF, and FFLNITMSIILCLIFCFLGIY. Positions 76 and 79 each coordinate Na(+).

Belongs to the fluoride channel Fluc/FEX (TC 1.A.43) family.

Its subcellular location is the cell inner membrane. It carries out the reaction fluoride(in) = fluoride(out). Na(+) is not transported, but it plays an essential structural role and its presence is essential for fluoride channel function. Its function is as follows. Fluoride-specific ion channel. Important for reducing fluoride concentration in the cell, thus reducing its toxicity. The chain is Fluoride-specific ion channel FluC from Campylobacter hominis (strain ATCC BAA-381 / DSM 21671 / CCUG 45161 / LMG 19568 / NCTC 13146 / CH001A).